Here is a 331-residue protein sequence, read N- to C-terminus: Trans-O-hydroxybenzylidenepyruvate hydratase-aldolase (331 aa).

The protein belongs to the DapA family.

The enzyme catalyses (3E)-4-(2-hydroxyphenyl)-2-oxobut-3-enoate + H2O = salicylaldehyde + pyruvate. Its pathway is aromatic compound metabolism; naphthalene degradation. In terms of biological role, involved in the naphthalene upper catabolic pathway. Catalyzes the transformation of trans-O-hydroxybenzylidenepyruvate (THBPA) to salicylaldehyde and pyruvate. The reaction is reversible. Can also use substrate which carry trans-alpha,beta-unsaturated keto acid side chain and adjacent hydroxyl group such as trans-4-(3-hydroxy-2-thianaphthenyl)-2-oxo-but-3-enoate, trans-4-(3-hydroxy-2-benzofuranyl)-2-oxobut-3-enoate, and trans-4-(3-hydroxy-2-thienyl)-2-oxobut-3-enoate. The protein is Trans-O-hydroxybenzylidenepyruvate hydratase-aldolase (nahE) of Pseudomonas putida (Arthrobacter siderocapsulatus).